A 246-amino-acid chain; its full sequence is 1-(5-phosphoribosyl)-5-[(5-phosphoribosylamino)methylideneamino] imidazole-4-carboxamide isomerase (246 aa).

Asp8 serves as the catalytic Proton acceptor. Asp130 serves as the catalytic Proton donor.

This sequence belongs to the HisA/HisF family.

It localises to the cytoplasm. It carries out the reaction 1-(5-phospho-beta-D-ribosyl)-5-[(5-phospho-beta-D-ribosylamino)methylideneamino]imidazole-4-carboxamide = 5-[(5-phospho-1-deoxy-D-ribulos-1-ylimino)methylamino]-1-(5-phospho-beta-D-ribosyl)imidazole-4-carboxamide. The protein operates within amino-acid biosynthesis; L-histidine biosynthesis; L-histidine from 5-phospho-alpha-D-ribose 1-diphosphate: step 4/9. The chain is 1-(5-phosphoribosyl)-5-[(5-phosphoribosylamino)methylideneamino] imidazole-4-carboxamide isomerase from Shigella dysenteriae serotype 1 (strain Sd197).